A 122-amino-acid chain; its full sequence is Small ribosomal subunit protein uS13 (122 aa).

Positions 99–122 are disordered; the sequence is RGQRTHTNARTRKGPAKAIAGKKK.

This sequence belongs to the universal ribosomal protein uS13 family. As to quaternary structure, part of the 30S ribosomal subunit. Forms a loose heterodimer with protein S19. Forms two bridges to the 50S subunit in the 70S ribosome.

Its function is as follows. Located at the top of the head of the 30S subunit, it contacts several helices of the 16S rRNA. In the 70S ribosome it contacts the 23S rRNA (bridge B1a) and protein L5 of the 50S subunit (bridge B1b), connecting the 2 subunits; these bridges are implicated in subunit movement. Contacts the tRNAs in the A and P-sites. The sequence is that of Small ribosomal subunit protein uS13 from Rhizobium etli (strain CIAT 652).